The primary structure comprises 228 residues: 2,3-bisphosphoglycerate-dependent phosphoglycerate mutase (228 aa).

Substrate is bound by residues 8–15 (RHGQSEWN), 21–22 (TG), R60, 87–90 (ERHY), K98, 114–115 (RR), and 183–184 (GN). H9 functions as the Tele-phosphohistidine intermediate in the catalytic mechanism. The active-site Proton donor/acceptor is the E87.

This sequence belongs to the phosphoglycerate mutase family. BPG-dependent PGAM subfamily.

The catalysed reaction is (2R)-2-phosphoglycerate = (2R)-3-phosphoglycerate. The protein operates within carbohydrate degradation; glycolysis; pyruvate from D-glyceraldehyde 3-phosphate: step 3/5. Its function is as follows. Catalyzes the interconversion of 2-phosphoglycerate and 3-phosphoglycerate. The polypeptide is 2,3-bisphosphoglycerate-dependent phosphoglycerate mutase (Staphylococcus aureus (strain Mu3 / ATCC 700698)).